A 217-amino-acid polypeptide reads, in one-letter code: Non-structural protein NS3 (217 aa).

The protein belongs to the orbivirus NS3 family.

May play a role in the release of virions from infected cells. The protein is Non-structural protein NS3 (Segment-10) of African horse sickness virus 9 (AHSV-9).